Here is a 456-residue protein sequence, read N- to C-terminus: Cysteine--tRNA ligase (456 aa).

Cys28 provides a ligand contact to Zn(2+). The 'HIGH' region signature appears at 30 to 40 (ITVYDHCHLGH). Residues Cys209, His234, and Glu238 each coordinate Zn(2+). Positions 266 to 270 (KMAKS) match the 'KMSKS' region motif. Lys269 serves as a coordination point for ATP.

This sequence belongs to the class-I aminoacyl-tRNA synthetase family. Monomer. The cofactor is Zn(2+).

Its subcellular location is the cytoplasm. It carries out the reaction tRNA(Cys) + L-cysteine + ATP = L-cysteinyl-tRNA(Cys) + AMP + diphosphate. This is Cysteine--tRNA ligase from Legionella pneumophila subsp. pneumophila (strain Philadelphia 1 / ATCC 33152 / DSM 7513).